The following is a 512-amino-acid chain: Transactivator/viroplasmin protein (512 aa).

Disordered regions lie at residues 76–123 and 474–512; these read GNER…NPVA and ADSS…IPSI. Over residues 476–487 the composition is skewed to polar residues; sequence SSSTSGEQNNVE. Positions 499–512 are enriched in basic and acidic residues; the sequence is YDERSDDHKRIPSI.

This sequence belongs to the caulimoviridae viroplasmin family.

The protein localises to the host cytoplasm. In terms of biological role, enhances the translation of downstream ORFs on polycistronic mRNAs derived from figwort mosaic virus. This is Transactivator/viroplasmin protein from Figwort mosaic virus (strain DxS) (FMV).